We begin with the raw amino-acid sequence, 429 residues long: Phosphoribosylamine--glycine ligase (429 aa).

The ATP-grasp domain occupies 109–316 (KDFLARHQIP…LVELCLAAID (208 aa)). 135-196 (VREQGAPIVV…EEFLDGEEAS (62 aa)) contacts ATP. Residues 212-234 (SQDHKRVGDKDTGPNTGGMGAYS) are disordered. A compositionally biased stretch (basic and acidic residues) spans 213-223 (QDHKRVGDKDT). Mg(2+) is bound by residues Glu286 and Asn288.

The protein belongs to the GARS family. The cofactor is Mg(2+). It depends on Mn(2+) as a cofactor.

It catalyses the reaction 5-phospho-beta-D-ribosylamine + glycine + ATP = N(1)-(5-phospho-beta-D-ribosyl)glycinamide + ADP + phosphate + H(+). It participates in purine metabolism; IMP biosynthesis via de novo pathway; N(1)-(5-phospho-D-ribosyl)glycinamide from 5-phospho-alpha-D-ribose 1-diphosphate: step 2/2. In Vibrio vulnificus (strain CMCP6), this protein is Phosphoribosylamine--glycine ligase.